Reading from the N-terminus, the 72-residue chain is Protein SlyX homolog (72 aa).

It belongs to the SlyX family.

This chain is Protein SlyX homolog, found in Bradyrhizobium diazoefficiens (strain JCM 10833 / BCRC 13528 / IAM 13628 / NBRC 14792 / USDA 110).